The sequence spans 263 residues: CRISPR-associated protein Cas5 2 (263 aa).

This sequence belongs to the CRISPR-associated protein Cas5 family. Subtype I-A/Apern subfamily. As to quaternary structure, part of the aCascade ribonucleoprotein complex, minimally composed of Csa2 and Cas5a, which binds crRNA. Other possible components of aCascade in strain P1 are Cas6b (SSO1437) and Csa5 (SSO1443), while SSO1399, Cas5b (SSO1400) and SSO1401 have sometimes been seen weakly associated. Csa2 is probably the major RNA-binding subunit. The Csa2-Cas5a-crRNA complex also binds target DNA homologous to crRNA, probably forming an R-loop. Purified aCascade forms a filament about 6 nm in width.

In terms of biological role, CRISPR (clustered regularly interspaced short palindromic repeat) is an adaptive immune system that provides protection against mobile genetic elements (viruses, transposable elements and conjugative plasmids). CRISPR clusters contain spacers, sequences complementary to antecedent mobile elements, and target invading nucleic acids. CRISPR clusters are transcribed and processed into CRISPR RNA (crRNA). This is CRISPR-associated protein Cas5 2 (cas5b) from Saccharolobus solfataricus (strain ATCC 35092 / DSM 1617 / JCM 11322 / P2) (Sulfolobus solfataricus).